The primary structure comprises 431 residues: MGLSLRVRRRGGSVSKKEIIPVTSCSEEVEITIPSQFQCPISYELMKDPVIIASGITYDRENIEKWFESGYQTCPVTNTVLTSLEQIPNHTIRRMIQGWCGSSLGGGIERIPTPRVPVTSHQVSEICERLSAATRRGDYAACMEMVTKMTRLGKESERNRKCVKENGAGLVLCVCFDAFSENANASLLLEETVSVLTWMLPIGLEGQSKLTTTSSFNRLVELLRNGDQNAAFLIKELLELNVTHVHALTKINGVQEAFMKSINRDSTCVNSLISIHHMILTNQETVSRFLELDLVNITVEMLVDSENSVCEKALTVLNVICETKEGREKVRRNKLVIPILVKKILKISEKKDLVSVMWKVCKSGDGSEVEEALRLGAFKKLVVMLQVGCGEGTKEKVTELLKMMNKVMKMNGFVDRSYSSSIEFKHVKKPF.

One can recognise a U-box domain in the interval 32-106 (TIPSQFQCPI…QGWCGSSLGG (75 aa)).

The enzyme catalyses S-ubiquitinyl-[E2 ubiquitin-conjugating enzyme]-L-cysteine + [acceptor protein]-L-lysine = [E2 ubiquitin-conjugating enzyme]-L-cysteine + N(6)-ubiquitinyl-[acceptor protein]-L-lysine.. Its pathway is protein modification; protein ubiquitination. Its function is as follows. Functions as an E3 ubiquitin ligase. The sequence is that of U-box domain-containing protein 20 (PUB20) from Arabidopsis thaliana (Mouse-ear cress).